Here is a 111-residue protein sequence, read N- to C-terminus: Nucleoid-associated protein PSEEN1789 (111 aa).

Disordered stretches follow at residues 1 to 25 and 89 to 111; these read MMKG…KMQE and NSQD…KMPF.

Belongs to the YbaB/EbfC family. As to quaternary structure, homodimer.

The protein localises to the cytoplasm. The protein resides in the nucleoid. In terms of biological role, binds to DNA and alters its conformation. May be involved in regulation of gene expression, nucleoid organization and DNA protection. The chain is Nucleoid-associated protein PSEEN1789 from Pseudomonas entomophila (strain L48).